Consider the following 351-residue polypeptide: Cysteine-rich receptor-like protein kinase 45 (351 aa).

Positions 37-287 (NDFSELVGRG…EILRYIHIAL (251 aa)) constitute a Protein kinase domain. ATP is bound by residues 43–51 (VGRGGFGFV) and Lys-65. The residue at position 110 (Tyr-110) is a Phosphotyrosine. The active-site Proton acceptor is the Asp-162. Phosphothreonine is present on residues Thr-197 and Thr-202. Position 210 is a phosphotyrosine (Tyr-210).

This sequence belongs to the protein kinase superfamily. Ser/Thr protein kinase family. CRK subfamily. Interacts with CRK36. Autophosphorylated and phosphorylated by CRK36.

The protein localises to the cytoplasm. The protein resides in the cytosol. The catalysed reaction is L-seryl-[protein] + ATP = O-phospho-L-seryl-[protein] + ADP + H(+). It carries out the reaction L-threonyl-[protein] + ATP = O-phospho-L-threonyl-[protein] + ADP + H(+). Forms a complex with CRK36 that may negatively control abscisic acid (ABA) and osmotic stress signal transduction. Involved in plant response to ABA during seed germination, early seedling growth and responses to abiotic stresses by inducing the expression of ABA-responsive genes and stress-inducible genes. Acts as a positive regulator in disease resistance, downstream of NPR1 and WRKY70. This Arabidopsis thaliana (Mouse-ear cress) protein is Cysteine-rich receptor-like protein kinase 45.